Consider the following 300-residue polypeptide: Protoheme IX farnesyltransferase (300 aa).

Transmembrane regions (helical) follow at residues 24–44, 46–66, 94–114, 118–138, 146–166, 172–192, 224–244, and 278–298; these read VTQL…PGMV, WHVL…AFAI, PQIL…LYTF, LTMW…TLLL, IVIG…AVTG, AWIL…VLAL, VILF…VVYL, and IVYL…RPLL.

Belongs to the UbiA prenyltransferase family. Protoheme IX farnesyltransferase subfamily.

Its subcellular location is the cell inner membrane. The catalysed reaction is heme b + (2E,6E)-farnesyl diphosphate + H2O = Fe(II)-heme o + diphosphate. It functions in the pathway porphyrin-containing compound metabolism; heme O biosynthesis; heme O from protoheme: step 1/1. Its function is as follows. Converts heme B (protoheme IX) to heme O by substitution of the vinyl group on carbon 2 of heme B porphyrin ring with a hydroxyethyl farnesyl side group. The chain is Protoheme IX farnesyltransferase from Burkholderia ambifaria (strain MC40-6).